A 114-amino-acid polypeptide reads, in one-letter code: Large ribosomal subunit protein bL19 (114 aa).

The protein belongs to the bacterial ribosomal protein bL19 family.

Its function is as follows. This protein is located at the 30S-50S ribosomal subunit interface and may play a role in the structure and function of the aminoacyl-tRNA binding site. This Clavibacter michiganensis subsp. michiganensis (strain NCPPB 382) protein is Large ribosomal subunit protein bL19.